The chain runs to 395 residues: Ketoisovalerate oxidoreductase subunit VorA (395 aa).

As to quaternary structure, heterotetramer of one alpha, one beta, one delta and one gamma chain.

It carries out the reaction 3-methyl-2-oxobutanoate + 2 oxidized [2Fe-2S]-[ferredoxin] + CoA = 2-methylpropanoyl-CoA + 2 reduced [2Fe-2S]-[ferredoxin] + CO2 + H(+). This Pyrococcus abyssi (strain GE5 / Orsay) protein is Ketoisovalerate oxidoreductase subunit VorA (vorA).